We begin with the raw amino-acid sequence, 370 residues long: Platelet-derived growth factor D (370 aa).

Positions 1–18 (MHRLIFVCTLVCANFCSC) are cleaved as a signal peptide. In terms of domain architecture, CUB spans 52-170 (RDETIQVRGN…PGFKIYYSLL (119 aa)). A disulfide bond links cysteine 109 and cysteine 131. A glycan (N-linked (GlcNAc...) asparagine) is linked at asparagine 276. 2 disulfides stabilise this stretch: cysteine 302/cysteine 360 and cysteine 306/cysteine 362.

Belongs to the PDGF/VEGF growth factor family. Homodimer; disulfide-linked. Interacts with PDGFRB homodimers, and with heterodimers formed by PDGFRA and PDGFRB. In terms of processing, activated by proteolytic cleavage. Proteolytic removal of the N-terminal CUB domain releasing the core domain is necessary for unmasking the receptor-binding epitopes of the core domain. Cleavage after Arg-247 or Arg-249 by urokinase plasminogen activator gives rise to the active form.

It localises to the secreted. Growth factor that plays an essential role in the regulation of embryonic development, cell proliferation, cell migration, survival and chemotaxis. Potent mitogen for cells of mesenchymal origin. Plays an important role in wound healing. Induces macrophage recruitment, increased interstitial pressure, and blood vessel maturation during angiogenesis. Can initiate events that lead to a mesangial proliferative glomerulonephritis, including influx of monocytes and macrophages and production of extracellular matrix. In Pongo abelii (Sumatran orangutan), this protein is Platelet-derived growth factor D (PDGFD).